Here is a 189-residue protein sequence, read N- to C-terminus: Cell division protein SepF (189 aa).

The span at 152–163 shows a compositional bias: polar residues; the sequence is FQEEPSPSSVMN. The segment at 152-189 is disordered; sequence FQEEPSPSSVMNKDNEGPVSESVMAPEPAWGASVPSAI.

This sequence belongs to the SepF family. Homodimer. Interacts with FtsZ.

The protein resides in the cytoplasm. Cell division protein that is part of the divisome complex and is recruited early to the Z-ring. Probably stimulates Z-ring formation, perhaps through the cross-linking of FtsZ protofilaments. Its function overlaps with FtsA. The protein is Cell division protein SepF of Prochlorococcus marinus (strain SARG / CCMP1375 / SS120).